A 141-amino-acid chain; its full sequence is Phage-like element PBSX protein XkdS (141 aa).

This sequence to B.subtilis YqbS.

This is Phage-like element PBSX protein XkdS (xkdS) from Bacillus subtilis (strain 168).